Consider the following 611-residue polypeptide: UvrABC system protein C (611 aa).

Residues 12–96 (DQPGIYQYFD…IKQLKPKYNI (85 aa)) form the GIY-YIG domain. In terms of domain architecture, UVR spans 202-237 (EKILEILNQKMQKYAENLQFEEAAEIRDRIKSIESA).

The protein belongs to the UvrC family. In terms of assembly, interacts with UvrB in an incision complex.

It localises to the cytoplasm. Functionally, the UvrABC repair system catalyzes the recognition and processing of DNA lesions. UvrC both incises the 5' and 3' sides of the lesion. The N-terminal half is responsible for the 3' incision and the C-terminal half is responsible for the 5' incision. This is UvrABC system protein C from Nautilia profundicola (strain ATCC BAA-1463 / DSM 18972 / AmH).